The sequence spans 113 residues: uncharacterized protein (113 aa).

This is an uncharacterized protein from Escherichia coli (strain K12).